The following is a 428-amino-acid chain: Light-independent protochlorophyllide reductase subunit N (428 aa).

Residues cysteine 29, cysteine 54, and cysteine 115 each coordinate [4Fe-4S] cluster.

It belongs to the BchN/ChlN family. Protochlorophyllide reductase is composed of three subunits; BchL, BchN and BchB. Forms a heterotetramer of two BchB and two BchN subunits. Requires [4Fe-4S] cluster as cofactor.

It carries out the reaction chlorophyllide a + oxidized 2[4Fe-4S]-[ferredoxin] + 2 ADP + 2 phosphate = protochlorophyllide a + reduced 2[4Fe-4S]-[ferredoxin] + 2 ATP + 2 H2O. Its pathway is porphyrin-containing compound metabolism; bacteriochlorophyll biosynthesis (light-independent). Functionally, component of the dark-operative protochlorophyllide reductase (DPOR) that uses Mg-ATP and reduced ferredoxin to reduce ring D of protochlorophyllide (Pchlide) to form chlorophyllide a (Chlide). This reaction is light-independent. The NB-protein (BchN-BchB) is the catalytic component of the complex. The protein is Light-independent protochlorophyllide reductase subunit N of Cereibacter sphaeroides (strain ATCC 17029 / ATH 2.4.9) (Rhodobacter sphaeroides).